The primary structure comprises 399 residues: Argininosuccinate synthase (399 aa).

Position 8–16 (8–16 (AYSGGLDTS)) interacts with ATP. Tyr-87 provides a ligand contact to L-citrulline. An ATP-binding site is contributed by Gly-117. L-aspartate is bound by residues Thr-119, Asn-123, and Asp-124. Asn-123 contributes to the L-citrulline binding site. The L-citrulline site is built by Arg-127, Ser-175, Glu-260, and Tyr-272.

It belongs to the argininosuccinate synthase family. Type 1 subfamily. As to quaternary structure, homotetramer.

The protein resides in the cytoplasm. The enzyme catalyses L-citrulline + L-aspartate + ATP = 2-(N(omega)-L-arginino)succinate + AMP + diphosphate + H(+). Its pathway is amino-acid biosynthesis; L-arginine biosynthesis; L-arginine from L-ornithine and carbamoyl phosphate: step 2/3. The polypeptide is Argininosuccinate synthase (Rhodococcus erythropolis (strain PR4 / NBRC 100887)).